Reading from the N-terminus, the 676-residue chain is MEKNLPDIFFFPNCVNVFSYKYSQDEFSNMSKTERDSFSLAVFPVIKHRWHNAHVVKHKGIYKVSTEARGKKVSPPSLGKPAHINLTAKQYIYSEHTISFECYSFLKCITNTEINSFDEYILRGLLEAGNSLQIFSNSVGKRTDTIGVLGNKYPFSKIPLASLTPKAQREIFSAWISHRPVVLTGGTGVGKTSQVPKLLLWFNYLFGGFSTLDKITNFHERPVILSLPRIALVRLHSNTILKSLGFKVLDGSPISLRYGSIPEELINKQPKKYGIVFSTHKLSLTKLFSYGTLIIDEVHEHDQIGDIIIAVARKHHTKIDSMFLMTATLEDDRERLKVFLPNPAFIHIPGDTLFKISEVFIHNKINPSSRMAYIEEEKRNLVTAIQMYTPPDGSSGIVFVASVAQCHEYKSYLEKRLPYDMYIIHGKVLDIDEILEKVYSSPNVSIIISTPYLESSVTIRNVTHIYDMGKVFVPAPFGGSQEFISKSMRDQRKGRVGRVNPGTYVYFYDLSYMKSIQRIDSEFLHNYILYANKFNLTLPEDLFIIPTNLDILWRTKEYIDSFDISTETWNKLLSNYYMKMIEYAKLYVLSPILAEELDNFERTGELTSIVREAILSLNLRIKILNFKHKDDDTYIHFCKILFGVYNGTNATIYYHRPLTGYMNMISDTIFVPVDNN.

The region spanning 172-347 (FSAWISHRPV…VFLPNPAFIH (176 aa)) is the Helicase ATP-binding domain. 185–192 (GGTGVGKT) contacts ATP. The short motif at 296 to 299 (DEVH) is the DEXH box element. The Helicase C-terminal domain occupies 366 to 535 (NPSSRMAYIE…NYILYANKFN (170 aa)).

This sequence belongs to the DEAD box helicase family. DEAH subfamily. As to quaternary structure, monomer.

Its subcellular location is the virion. The enzyme catalyses ATP + H2O = ADP + phosphate + H(+). NTP-dependent helicase that catalyzes unidirectional unwinding of 3'tailed duplex RNAs and plays an important role during transcription of early mRNAs, presumably by preventing R-loop formation behind the elongating RNA polymerase. Might also play a role in the export of newly synthesized mRNA chains out of the core into the cytoplasm. Required for replication and propagation of viral particles. In Bos taurus (Bovine), this protein is RNA helicase NPH-II (OPG084).